Here is a 120-residue protein sequence, read N- to C-terminus: Large ribosomal subunit protein uL18 (120 aa).

It belongs to the universal ribosomal protein uL18 family. Part of the 50S ribosomal subunit; part of the 5S rRNA/L5/L18/L25 subcomplex. Contacts the 5S and 23S rRNAs.

This is one of the proteins that bind and probably mediate the attachment of the 5S RNA into the large ribosomal subunit, where it forms part of the central protuberance. The chain is Large ribosomal subunit protein uL18 from Bacillus cereus (strain AH820).